The following is a 257-amino-acid chain: Nickel import system ATP-binding protein NikD (257 aa).

The region spanning 4–245 (IDIQNLTIKN…HLHPYTERLI (242 aa)) is the ABC transporter domain. 37-44 (GESGAGKS) contributes to the ATP binding site.

It belongs to the ABC transporter superfamily. The complex is composed of two ATP-binding proteins (NikD and NikE), two transmembrane proteins (NikB and NikC) and a solute-binding protein (NikA).

The protein localises to the cell membrane. The catalysed reaction is Ni(2+)(out) + ATP + H2O = Ni(2+)(in) + ADP + phosphate + H(+). In terms of biological role, part of the ABC transporter complex NikABCDE (Opp2) involved in nickel import. Probably responsible for energy coupling to the transport system. This is Nickel import system ATP-binding protein NikD from Staphylococcus aureus (strain MRSA252).